We begin with the raw amino-acid sequence, 457 residues long: uncharacterized protein (457 aa).

Residues 5 to 63 enclose the TRAM domain; sequence PVEEGQKFPLTIRRMGINGEGIGYFKKAVVFVPGAITGEEVVVEAVKVRDRFTEAKLNK. Positions 76, 82, 85, and 166 each coordinate [4Fe-4S] cluster. Glutamine 290, tyrosine 319, aspartate 340, and aspartate 388 together coordinate S-adenosyl-L-methionine. Cysteine 415 serves as the catalytic Nucleophile.

The protein belongs to the class I-like SAM-binding methyltransferase superfamily. RNA M5U methyltransferase family.

This is an uncharacterized protein from Listeria innocua serovar 6a (strain ATCC BAA-680 / CLIP 11262).